The following is a 945-amino-acid chain: Glutamyl aminopeptidase (945 aa).

At 1–18 (MNFAEEEPSKKYCIKGKH) the chain is on the cytoplasmic side. The helical; Signal-anchor for type II membrane protein transmembrane segment at 19–39 (VAIICGVVVAVGLIVGLSVGL) threads the bilayer. Residues 40-945 (TRSCEQDTTP…SIREWFASLP (906 aa)) are Extracellular-facing. The disordered stretch occupies residues 43–77 (CEQDTTPAPSQPPPEASTALPPQDQNVCPDSEDES). 2 N-linked (GlcNAc...) asparagine glycosylation sites follow: N116 and N189. E215 is a binding site for substrate. N316 carries an N-linked (GlcNAc...) asparagine glycan. Residue 349–353 (GAMEN) participates in substrate binding. H385 is a binding site for Zn(2+). E386 (proton acceptor) is an active-site residue. Positions 389 and 408 each coordinate Zn(2+). Residues N546, N601, N637, N669, N754, and N792 are each glycosylated (N-linked (GlcNAc...) asparagine). A substrate-binding site is contributed by R878.

It belongs to the peptidase M1 family. In terms of assembly, homodimer; disulfide-linked. It depends on Zn(2+) as a cofactor. In terms of tissue distribution, early B-lineage cells and certain stromal cell of hemopoietic tissues. Also expressed by capillary endothelial cells, placenta, and epithelial cells of the intestine and proximal renal tubules.

The protein localises to the cell membrane. It carries out the reaction Release of N-terminal glutamate (and to a lesser extent aspartate) from a peptide.. With respect to regulation, substrate specificity is modulated by calcium which enhances the enzymatic activity for cleavage of acidic residues while reducing its activity with basic residues. Inhibited by aminopeptidase inhibitors amastatin and bestatin. Its function is as follows. Regulates central hypertension through its calcium-modulated preference to cleave N-terminal acidic residues from peptides such as angiotensin II. The protein is Glutamyl aminopeptidase (Enpep) of Mus musculus (Mouse).